Consider the following 558-residue polypeptide: Podocalyxin (558 aa).

Positions 1-22 (MRCALALSALLLLLSTPPLLPS) are cleaved as a signal peptide. Residues 20–29 (LPSSPSPSPS) show a composition bias toward pro residues. Disordered stretches follow at residues 20-50 (LPSS…PTPA), 83-210 (LGVS…DHLM), and 270-338 (SVIS…VAHE). The Extracellular segment spans residues 23–461 (SPSPSPSPSQ…EEAEDRFSMP (439 aa)). Composition is skewed to polar residues over residues 32 to 50 (QNAT…PTPA) and 83 to 107 (LGVS…NTTV). 3 N-linked (GlcNAc...) asparagine glycosylation sites follow: Asn-33, Asn-43, and Asn-104. Residues 125 to 142 (STKSADTTTVATSTATAK) are compositionally biased toward low complexity. Polar residues-rich tracts occupy residues 143 to 173 (PNTT…LTST), 190 to 204 (RQPT…PTSS), and 270 to 302 (SVIS…TSPA). Residue Asn-144 is glycosylated (N-linked (GlcNAc...) asparagine). Residues 313–324 (TMSSSPTAASTT) show a composition bias toward low complexity. A glycan (N-linked (GlcNAc...) asparagine) is linked at Asn-360. A helical transmembrane segment spans residues 462–482 (LIITIVCMASFLLLVAALYGC). Residues 483–558 (CHQRLSQRKD…DLDEEEDTHL (76 aa)) are Cytoplasmic-facing. The residue at position 518 (Thr-518) is a Phosphothreonine. A phosphoserine mark is found at Ser-529 and Ser-537. A Phosphothreonine modification is found at Thr-556.

The protein belongs to the podocalyxin family. Monomer; when associated with the membrane raft. Oligomer; when integrated in the apical membrane. Interacts (via the C-terminal PDZ-binding motif DTHL) with NHERF1 (via the PDZ domains); the interaction is not detected in glomerular epithelium cells, take place early in the secretory pathway and is necessary for its apical membrane sorting. Found in a complex with EZR, PODXL and NHERF2. Associates with the actin cytoskeleton through complex formation with EZR and NHERF2. Interacts (via the C-terminal PDZ-binding motif DTHL) with NHERF2 (via the PDZ 1 domain); interaction is detected in glomerular epithelium cells. Interacts with EZR. In terms of processing, N- and O-linked glycosylated. Sialoglycoprotein. Glomerular epithelium cell (podocyte).

Its subcellular location is the apical cell membrane. The protein resides in the cell projection. It is found in the lamellipodium. It localises to the filopodium. The protein localises to the ruffle. Its subcellular location is the microvillus. The protein resides in the membrane raft. It is found in the membrane. In terms of biological role, involved in the regulation of both adhesion and cell morphology and cancer progression. Functions as an anti-adhesive molecule that maintains an open filtration pathway between neighboring foot processes in the podocyte by charge repulsion. Acts as a pro-adhesive molecule, enhancing the adherence of cells to immobilized ligands, increasing the rate of migration and cell-cell contacts in an integrin-dependent manner. Induces the formation of apical actin-dependent microvilli. Involved in the formation of a preapical plasma membrane subdomain to set up initial epithelial polarization and the apical lumen formation during renal tubulogenesis. Plays a role in cancer development and aggressiveness by inducing cell migration and invasion through its interaction with the actin-binding protein EZR. Affects EZR-dependent signaling events, leading to increased activities of the MAPK and PI3K pathways in cancer cells. The polypeptide is Podocalyxin (PODXL) (Homo sapiens (Human)).